The sequence spans 626 residues: Grainyhead-like protein 3 homolog (626 aa).

The interval 30-95 (EAWKTYLENP…QGKRYYHGME (66 aa)) is transcription activation. The region spanning 226–460 (SLKSDFEYTL…DLETPPVLFI (235 aa)) is the Grh/CP2 DB domain.

Belongs to the grh/CP2 family. Grainyhead subfamily. Homodimer, also forms heterodimers with GRHL1 and GRHL2. Interacts with LMO4. Expressed in brain, colon, pancreas, placenta and kidney. Isoform 1 is expressed in lung and tonsil. Isoform 2 is prostate-specific.

The protein localises to the nucleus. In terms of biological role, transcription factor playing important roles in primary neurulation and in the differentiation of stratified epithelia of both ectodermal and endodermal origin. Binds directly to the consensus DNA sequence 5'-AACCGGTT-3' acting as an activator and repressor on distinct target genes. xhibits functional redundancy with GRHL2 in epidermal morphogenetic events and epidermal wound repair. Exhibits functional redundancy with GRHL2 in epidermal morphogenetic events and epidermal wound repair but is essential to form the epidermal barrier with TGM3 as critical direct target gene among others. Despite being dispensable during normal epidermal homeostasis in the adulthood, is again required for barrier repair after immune-mediated epidermal damage, regulates distinct gene batteries in embryonic epidermal differentiation and adult epidermal barrier reformation after injury. Plays unique and cooperative roles with GRHL2 in establishing distinct zones of primary neurulation. Essential for spinal closure, functions cooperatively with GRHL2 in closure 2 (forebrain/midbrain boundary) and posterior neuropore closure. Also required for proper development of the oral periderm. No genetic interaction with GRHL3, no functional cooperativity due to diverse target gene selectivity. In Homo sapiens (Human), this protein is Grainyhead-like protein 3 homolog.